Here is a 245-residue protein sequence, read N- to C-terminus: tRNA pseudouridine synthase A 1 (245 aa).

Residue Asp-53 is the Nucleophile of the active site. Substrate is bound at residue Tyr-111.

The protein belongs to the tRNA pseudouridine synthase TruA family. As to quaternary structure, homodimer.

The catalysed reaction is uridine(38/39/40) in tRNA = pseudouridine(38/39/40) in tRNA. Formation of pseudouridine at positions 38, 39 and 40 in the anticodon stem and loop of transfer RNAs. In Clostridium tetani (strain Massachusetts / E88), this protein is tRNA pseudouridine synthase A 1.